Here is a 309-residue protein sequence, read N- to C-terminus: Protein FdhE (309 aa).

It belongs to the FdhE family.

It is found in the cytoplasm. Functionally, necessary for formate dehydrogenase activity. This Escherichia coli O45:K1 (strain S88 / ExPEC) protein is Protein FdhE.